The primary structure comprises 146 residues: MSDIQLNTLKPAEGSKHAKRRVGRGIGSGLGKTAGRGHKGQKSRSGGFHKVGFEGGQMPLQRRLPKRGFTPLGQHLYAEVRLSELQLMEAEEIDVQALKAAGVVGQSVRYAKVIKSGELSRKVVLRGITATAGARAAIEAAGGSLA.

The tract at residues methionine 1–glycine 56 is disordered. The span at arginine 24–alanine 34 shows a compositional bias: gly residues.

Belongs to the universal ribosomal protein uL15 family. Part of the 50S ribosomal subunit.

Functionally, binds to the 23S rRNA. This chain is Large ribosomal subunit protein uL15, found in Bordetella bronchiseptica (strain ATCC BAA-588 / NCTC 13252 / RB50) (Alcaligenes bronchisepticus).